A 113-amino-acid chain; its full sequence is Virion membrane protein A21 homolog (113 aa).

A helical; Signal-anchor for type III membrane protein membrane pass occupies residues 1–23 (MFVLFLIVCYFILIFNIIVPKIA). Topologically, residues 24–113 (DKLRLEHEAF…CERAYTELFL (90 aa)) are virion surface.

It belongs to the chordopoxvirinae A21 family. In terms of assembly, envelope protein part of a stable entry-fusion complex (EFC) which is at least composed of proteins A16, A21, A28, G3, G9, H2, J5, and L5. Formation of the viral membrane is necessary for the assembly of the complex. In terms of processing, contains two intramolecular disulfide bonds. They are created by the viral disulfide bond formation pathway, a poxvirus-specific pathway that operates on the cytoplasmic side of the MV membranes.

It is found in the virion membrane. In terms of biological role, envelope protein part of the entry-fusion complex responsible for the virus membrane fusion with host cell membrane during virus entry. This is Virion membrane protein A21 homolog from Vertebrata (FPV).